The primary structure comprises 662 residues: Leucine aminopeptidase 2 (662 aa).

A peptide contacts are provided by residues 178-180 (QLE) and 304-309 (PYGGME). Residue H333 coordinates Zn(2+). Residue E334 is the Proton acceptor of the active site. Zn(2+)-binding residues include H337 and E356. Catalysis depends on Y422, which acts as the Proton donor.

The protein belongs to the peptidase M1 family. Zn(2+) is required as a cofactor.

It is found in the cytoplasm. Its subcellular location is the nucleus. It carries out the reaction an epoxide + H2O = an ethanediol. Its function is as follows. Aminopeptidase that preferentially cleaves di- and tripeptides. Also has low epoxide hydrolase activity (in vitro). Can hydrolyze the epoxide leukotriene LTA(4) but it forms preferentially 5,6-dihydroxy-7,9,11,14-eicosatetraenoic acid rather than the cytokine leukotriene B(4) as the product compared to the homologous mammalian enzyme (in vitro). In Kluyveromyces lactis (strain ATCC 8585 / CBS 2359 / DSM 70799 / NBRC 1267 / NRRL Y-1140 / WM37) (Yeast), this protein is Leucine aminopeptidase 2.